The sequence spans 876 residues: Alanine--tRNA ligase (876 aa).

Zn(2+) is bound by residues H564, H568, C666, and H670.

It belongs to the class-II aminoacyl-tRNA synthetase family. As to quaternary structure, homotetramer. It depends on Zn(2+) as a cofactor.

It localises to the cytoplasm. The enzyme catalyses tRNA(Ala) + L-alanine + ATP = L-alanyl-tRNA(Ala) + AMP + diphosphate. Catalyzes the attachment of alanine to tRNA(Ala) in a two-step reaction: alanine is first activated by ATP to form Ala-AMP and then transferred to the acceptor end of tRNA(Ala). Also edits incorrectly charged Ser-tRNA(Ala) and Gly-tRNA(Ala) via its editing domain. This chain is Alanine--tRNA ligase, found in Salmonella paratyphi A (strain ATCC 9150 / SARB42).